The sequence spans 606 residues: Glutamine--fructose-6-phosphate aminotransferase [isomerizing] (606 aa).

The active-site Nucleophile; for GATase activity is the C2. The Glutamine amidotransferase type-2 domain occupies 2-218 (CGIFGYLGQR…SGELAVLRIG (217 aa)). 2 SIS domains span residues 278–424 (FAES…QRQE) and 455–596 (WRCR…VDRP). K601 (for Fru-6P isomerization activity) is an active-site residue.

In terms of assembly, homodimer.

The protein resides in the cytoplasm. The catalysed reaction is D-fructose 6-phosphate + L-glutamine = D-glucosamine 6-phosphate + L-glutamate. Functionally, catalyzes the first step in hexosamine metabolism, converting fructose-6P into glucosamine-6P using glutamine as a nitrogen source. The protein is Glutamine--fructose-6-phosphate aminotransferase [isomerizing] of Chlamydia muridarum (strain MoPn / Nigg).